The following is a 565-amino-acid chain: Carboxylesterase 1D (565 aa).

The N-terminal stretch at 1–18 (MGLYPLIWLSLAACTAWG) is a signal peptide. N79 is a glycosylation site (N-linked (GlcNAc...) asparagine). C87 and C116 form a disulfide bridge. S221 serves as the catalytic Acyl-ester intermediate. C273 and C284 are oxidised to a cystine. Residue E353 is the Charge relay system of the active site. K382 bears the N6-succinyllysine mark. The Charge relay system role is filled by H466. A glycan (N-linked (GlcNAc...) asparagine) is linked at N489. The short motif at 562-565 (HVEL) is the Prevents secretion from ER element.

The protein belongs to the type-B carboxylesterase/lipase family. Homotrimer. Highest expression occurs in liver with lower levels in adipose tissue, kidney, heart, intestine, lung, testis and thymus.

It localises to the endoplasmic reticulum lumen. The protein resides in the cytoplasm. Its subcellular location is the cytosol. The protein localises to the lipid droplet. It is found in the microsome. The enzyme catalyses a carboxylic ester + H2O = an alcohol + a carboxylate + H(+). It carries out the reaction a long-chain fatty acyl ethyl ester + H2O = a long-chain fatty acid + ethanol + H(+). It catalyses the reaction all-trans-retinyl hexadecanoate + H2O = all-trans-retinol + hexadecanoate + H(+). Its function is as follows. Major lipase in white adipose tissue. Involved in the metabolism of xenobiotics and of natural substrates. Hydrolyzes triacylglycerols and monoacylglycerols, with a preference for monoacylglycerols. The susceptibility of the substrate increases with decreasing acyl chain length of the fatty acid moiety. Catalyzes the synthesis of fatty acid ethyl esters. Hydrolyzes retinyl esters. This is Carboxylesterase 1D from Mus musculus (Mouse).